A 429-amino-acid chain; its full sequence is Enolase (429 aa).

Gln167 is a (2R)-2-phosphoglycerate binding site. The active-site Proton donor is the Glu209. Residues Asp246, Glu289, and Asp316 each contribute to the Mg(2+) site. (2R)-2-phosphoglycerate is bound by residues Lys341, Arg370, Ser371, and Lys392. Catalysis depends on Lys341, which acts as the Proton acceptor.

It belongs to the enolase family. In terms of assembly, component of the RNA degradosome, a multiprotein complex involved in RNA processing and mRNA degradation. The cofactor is Mg(2+).

The protein resides in the cytoplasm. It localises to the secreted. Its subcellular location is the cell surface. It carries out the reaction (2R)-2-phosphoglycerate = phosphoenolpyruvate + H2O. It functions in the pathway carbohydrate degradation; glycolysis; pyruvate from D-glyceraldehyde 3-phosphate: step 4/5. Functionally, catalyzes the reversible conversion of 2-phosphoglycerate (2-PG) into phosphoenolpyruvate (PEP). It is essential for the degradation of carbohydrates via glycolysis. The protein is Enolase of Pseudomonas fluorescens (strain ATCC BAA-477 / NRRL B-23932 / Pf-5).